Consider the following 151-residue polypeptide: NADH-quinone oxidoreductase subunit I 2 (151 aa).

2 4Fe-4S ferredoxin-type domains span residues 49-82 (PRLN…VTSE) and 93-122 (VTFT…LTQD). 8 residues coordinate [4Fe-4S] cluster: C62, C65, C68, C72, C102, C105, C108, and C112.

It belongs to the complex I 23 kDa subunit family. In terms of assembly, NDH-1 is composed of 14 different subunits. Subunits NuoA, H, J, K, L, M, N constitute the membrane sector of the complex. The cofactor is [4Fe-4S] cluster.

It localises to the cell inner membrane. It catalyses the reaction a quinone + NADH + 5 H(+)(in) = a quinol + NAD(+) + 4 H(+)(out). Functionally, NDH-1 shuttles electrons from NADH, via FMN and iron-sulfur (Fe-S) centers, to quinones in the respiratory chain. The immediate electron acceptor for the enzyme in this species is believed to be ubiquinone. Couples the redox reaction to proton translocation (for every two electrons transferred, four hydrogen ions are translocated across the cytoplasmic membrane), and thus conserves the redox energy in a proton gradient. This Solibacter usitatus (strain Ellin6076) protein is NADH-quinone oxidoreductase subunit I 2.